The following is a 301-amino-acid chain: Acetylglutamate kinase (301 aa).

Substrate-binding positions include 72–73 (GG), Arg94, and Asn199.

It belongs to the acetylglutamate kinase family. ArgB subfamily.

Its subcellular location is the cytoplasm. It catalyses the reaction N-acetyl-L-glutamate + ATP = N-acetyl-L-glutamyl 5-phosphate + ADP. Its pathway is amino-acid biosynthesis; L-arginine biosynthesis; N(2)-acetyl-L-ornithine from L-glutamate: step 2/4. In terms of biological role, catalyzes the ATP-dependent phosphorylation of N-acetyl-L-glutamate. The chain is Acetylglutamate kinase from Bartonella quintana (strain Toulouse) (Rochalimaea quintana).